The following is a 356-amino-acid chain: Guanine nucleotide-binding protein alpha-2 subunit (356 aa).

Residue G2 is the site of N-myristoyl glycine attachment. C4 carries the S-palmitoyl cysteine lipid modification. Residues R32–Y356 enclose the G-alpha domain. A G1 motif region spans residues K35–T48. Residues E43, G45, K46, S47, T48, D153, L178, T184, G206, N272, K273, D275, and A328 each contribute to the GTP site. S47 serves as a coordination point for Mg(2+). The interval D176–T184 is G2 motif. T184 is a Mg(2+) binding site. The interval F199 to R208 is G3 motif. Residues I268–D275 are G4 motif. The tract at residues T326–T331 is G5 motif.

This sequence belongs to the G-alpha family. G(q) subfamily. As to quaternary structure, g proteins are composed of 3 units; alpha, beta and gamma. The alpha chain contains the guanine nucleotide binding site. Mg(2+) serves as cofactor.

Functionally, guanine nucleotide-binding proteins (G proteins) are involved as modulators or transducers in various transmembrane signaling systems. Involved in behavioral responses to P.aeruginosa by controlling the expression of daf-7, a member of the TGF-beta family, in ASJ sensory neurons. The sequence is that of Guanine nucleotide-binding protein alpha-2 subunit (gpa-2) from Caenorhabditis elegans.